A 135-amino-acid polypeptide reads, in one-letter code: Retinol-binding protein 1 (135 aa).

Positions 22–32 (RALDVNVALRK) are important for interaction with STRA6. All-trans-retinol-binding residues include Lys-41, Met-63, and Gln-109.

Belongs to the calycin superfamily. Fatty-acid binding protein (FABP) family. Interacts (only as retinol-free apoprotein) with STRA6.

It localises to the cytoplasm. The protein localises to the lipid droplet. Cytoplasmic retinol-binding protein. Accepts retinol from the transport protein STRA6, and thereby contributes to retinol uptake, storage and retinoid homeostasis. The sequence is that of Retinol-binding protein 1 (Rbp1) from Mus musculus (Mouse).